A 472-amino-acid chain; its full sequence is 12S seed storage protein CRA1 (472 aa).

The first 24 residues, M1 to Q24, serve as a signal peptide directing secretion. Cystine bridges form between C36/C69 and C112/C289. The 196-residue stretch at L41–Q236 folds into the Cupin type-1 1 domain. T115 bears the Phosphothreonine mark. Positions R259 to G283 are disordered. A Cupin type-1 2 domain is found at D295–R444. At Y312 the chain carries Phosphotyrosine. S314 bears the Phosphoserine mark. T408 and T433 each carry phosphothreonine.

Belongs to the 11S seed storage protein (globulins) family. Hexamer; each subunit is composed of an acidic and a basic chain derived from a single precursor and linked by a disulfide bond. Post-translationally, phosphorylated in seeds on some Tyr residues in response to abscisic acid (ABA). In terms of processing, proteolytically processed during seed maturation at a conserved Asn-Gly peptide bond by an asparaginyl endopeptidase to produce two mature polypeptides referred to as alpha and beta subunits that are joined together by a disulfide bond. Accumulates in seeds 8 days after anthesis.

It localises to the protein storage vacuole. In terms of biological role, seed storage protein. The chain is 12S seed storage protein CRA1 (CRA1) from Arabidopsis thaliana (Mouse-ear cress).